A 410-amino-acid chain; its full sequence is Neuroserpin (410 aa).

The N-terminal stretch at Met-1 to Ala-16 is a signal peptide. Residues Asn-157 and Asn-401 are each glycosylated (N-linked (GlcNAc...) asparagine).

It belongs to the serpin family. Detected in embryonic ocular vitreous fluid (at protein level). In the embryo present in retina, brain, cerebellum and spinal cord. In adult, predominantly expressed in the brain.

The protein localises to the secreted. Its subcellular location is the cytoplasmic vesicle. It localises to the secretory vesicle lumen. It is found in the perikaryon. Its function is as follows. Serine protease inhibitor that inhibits plasminogen activators and plasmin but not thrombin. May be involved in the formation or reorganization of synaptic connections as well as for synaptic plasticity in the adult nervous system. May protect neurons from cell damage by tissue-type plasminogen activator. This is Neuroserpin (SERPINI1) from Gallus gallus (Chicken).